Reading from the N-terminus, the 437-residue chain is MATSNERKPAIFLLSLGCSKNTVDSERLTAQAVASGLTFTDDVDEASIILINTCGFIEDAKKESIDEMLAAIGKKEEGIVREVYVMGCLVELYRKELSEEMPEVDGWFGTRQLPDVLAAIGAHYCEELYDRRELLTPPHYAFLKISEGCNRRCSFCSIPKIRGPYVSQPIEQLLREAALLQEQGVRELNLIAQDISVYGYDLYGKPALNDLTLRLSDMGFDWIRLLYAYPLNFPLEVIDTMRQRRNVCNYLDMPLQHINDRILKSMQRGIGRKGTEELIDAIRQKNPDIRLRTTMIAGYPSETREEFDELLDFVRQARFDRLGCFPYRHEEHAPAYALEDTISDKEKEERVGELMELQESIAASLNRKLEGQTLTVLIDRIEDNVAYGRTEYDAPEVDNDVIIEIGDEAVEEGEFRQVTVEDSTAYELFGRVGSECS.

An MTTase N-terminal domain is found at 9–125 (PAIFLLSLGC…VLAAIGAHYC (117 aa)). 6 residues coordinate [4Fe-4S] cluster: C18, C54, C88, C149, C153, and C156. Residues 135 to 364 (LTPPHYAFLK…MELQESIAAS (230 aa)) enclose the Radical SAM core domain. In terms of domain architecture, TRAM spans 367-434 (RKLEGQTLTV…AYELFGRVGS (68 aa)).

This sequence belongs to the methylthiotransferase family. RimO subfamily. It depends on [4Fe-4S] cluster as a cofactor.

Its subcellular location is the cytoplasm. It catalyses the reaction L-aspartate(89)-[ribosomal protein uS12]-hydrogen + (sulfur carrier)-SH + AH2 + 2 S-adenosyl-L-methionine = 3-methylsulfanyl-L-aspartate(89)-[ribosomal protein uS12]-hydrogen + (sulfur carrier)-H + 5'-deoxyadenosine + L-methionine + A + S-adenosyl-L-homocysteine + 2 H(+). Its function is as follows. Catalyzes the methylthiolation of an aspartic acid residue of ribosomal protein uS12. In Chlorobaculum parvum (strain DSM 263 / NCIMB 8327) (Chlorobium vibrioforme subsp. thiosulfatophilum), this protein is Ribosomal protein uS12 methylthiotransferase RimO.